The following is a 430-amino-acid chain: Adenylosuccinate synthetase (430 aa).

GTP contacts are provided by residues 12–18 (GDEGKGK) and 40–42 (GHT). Residue D13 is the Proton acceptor of the active site. D13 and G40 together coordinate Mg(2+). Residues 13-16 (DEGK), 38-41 (NAGH), T128, R142, Q223, T238, and R302 contribute to the IMP site. H41 functions as the Proton donor in the catalytic mechanism. Substrate is bound at residue 298–304 (TTTGRPR). GTP is bound by residues R304, 330–332 (SID), and 412–414 (SVG).

Belongs to the adenylosuccinate synthetase family. As to quaternary structure, homodimer. Mg(2+) serves as cofactor.

Its subcellular location is the cytoplasm. The enzyme catalyses IMP + L-aspartate + GTP = N(6)-(1,2-dicarboxyethyl)-AMP + GDP + phosphate + 2 H(+). It functions in the pathway purine metabolism; AMP biosynthesis via de novo pathway; AMP from IMP: step 1/2. Plays an important role in the de novo pathway of purine nucleotide biosynthesis. Catalyzes the first committed step in the biosynthesis of AMP from IMP. In Bacillus licheniformis (strain ATCC 14580 / DSM 13 / JCM 2505 / CCUG 7422 / NBRC 12200 / NCIMB 9375 / NCTC 10341 / NRRL NRS-1264 / Gibson 46), this protein is Adenylosuccinate synthetase.